Consider the following 301-residue polypeptide: MRAKITSVIVNNFYVYIYDLKIETKAIPKGIFKHDSHELKPMVGDDIEVELVDGVYLIVKIYDRYNQLIRPKVANVDIVLVVASIVQPDLNTLTLNKYLAFYEARNVKNVAIGLSKYDLASDSLKQKVDQLILDYQRNNYKVFVLTNEHDISLLKKFIKKHTLCLAGNSGVGKSTLINKLDPSIKQRTQEISQFLNRGKHTTTSTKLISFANGFLVDTPGFGNLEVNLTKNEMANAFSDFANYARFCKFSNCLHIDEPHCAIKKAVNDDQIVNWRYDDYLKIMKKLPNDVLEIKTRNQNKK.

The 160-residue stretch at 65–224 (YNQLIRPKVA…LVDTPGFGNL (160 aa)) folds into the CP-type G domain. Residues 115–118 (SKYD) and 167–175 (GNSGVGKST) contribute to the GTP site. 4 residues coordinate Zn(2+): Cys-247, Cys-252, His-254, and Cys-260.

It belongs to the TRAFAC class YlqF/YawG GTPase family. RsgA subfamily. In terms of assembly, monomer. Associates with 30S ribosomal subunit, binds 16S rRNA. The cofactor is Zn(2+).

The protein localises to the cytoplasm. Its function is as follows. One of several proteins that assist in the late maturation steps of the functional core of the 30S ribosomal subunit. Helps release RbfA from mature subunits. May play a role in the assembly of ribosomal proteins into the subunit. Circularly permuted GTPase that catalyzes slow GTP hydrolysis, GTPase activity is stimulated by the 30S ribosomal subunit. The polypeptide is Small ribosomal subunit biogenesis GTPase RsgA (Ureaplasma urealyticum serovar 10 (strain ATCC 33699 / Western)).